We begin with the raw amino-acid sequence, 490 residues long: Cardiolipin synthase A (490 aa).

Helical transmembrane passes span 4 to 24 (YLFT…IIIV) and 39 to 59 (AAWL…WFLL). PLD phosphodiesterase domains follow at residues 220-247 (MDLR…VDPY) and 403-430 (KKGL…DMRS). Active-site residues include H225, K227, D232, H408, K410, and D415.

The protein belongs to the phospholipase D family. Cardiolipin synthase subfamily. ClsA sub-subfamily.

It is found in the cell membrane. It catalyses the reaction 2 a 1,2-diacyl-sn-glycero-3-phospho-(1'-sn-glycerol) = a cardiolipin + glycerol. Catalyzes the reversible phosphatidyl group transfer from one phosphatidylglycerol molecule to another to form cardiolipin (CL) (diphosphatidylglycerol) and glycerol. The sequence is that of Cardiolipin synthase A from Buchnera aphidicola subsp. Baizongia pistaciae (strain Bp).